The primary structure comprises 181 residues: Putative J domain-containing protein R266 (181 aa).

The J domain occupies 6-70 (NYYQILDVDN…LKRLNYDSYL (65 aa)).

This Acanthamoeba polyphaga (Amoeba) protein is Putative J domain-containing protein R266.